The following is a 592-amino-acid chain: 2-succinyl-5-enolpyruvyl-6-hydroxy-3-cyclohexene-1-carboxylate synthase (592 aa).

Belongs to the TPP enzyme family. MenD subfamily. As to quaternary structure, homodimer. It depends on Mg(2+) as a cofactor. Mn(2+) is required as a cofactor. The cofactor is thiamine diphosphate.

It catalyses the reaction isochorismate + 2-oxoglutarate + H(+) = 5-enolpyruvoyl-6-hydroxy-2-succinyl-cyclohex-3-ene-1-carboxylate + CO2. Its pathway is quinol/quinone metabolism; 1,4-dihydroxy-2-naphthoate biosynthesis; 1,4-dihydroxy-2-naphthoate from chorismate: step 2/7. It participates in quinol/quinone metabolism; menaquinone biosynthesis. Functionally, catalyzes the thiamine diphosphate-dependent decarboxylation of 2-oxoglutarate and the subsequent addition of the resulting succinic semialdehyde-thiamine pyrophosphate anion to isochorismate to yield 2-succinyl-5-enolpyruvyl-6-hydroxy-3-cyclohexene-1-carboxylate (SEPHCHC). The sequence is that of 2-succinyl-5-enolpyruvyl-6-hydroxy-3-cyclohexene-1-carboxylate synthase from Haloarcula marismortui (strain ATCC 43049 / DSM 3752 / JCM 8966 / VKM B-1809) (Halobacterium marismortui).